Reading from the N-terminus, the 341-residue chain is S-adenosylmethionine:tRNA ribosyltransferase-isomerase (341 aa).

This sequence belongs to the QueA family. As to quaternary structure, monomer.

The protein resides in the cytoplasm. The enzyme catalyses 7-aminomethyl-7-carbaguanosine(34) in tRNA + S-adenosyl-L-methionine = epoxyqueuosine(34) in tRNA + adenine + L-methionine + 2 H(+). The protein operates within tRNA modification; tRNA-queuosine biosynthesis. In terms of biological role, transfers and isomerizes the ribose moiety from AdoMet to the 7-aminomethyl group of 7-deazaguanine (preQ1-tRNA) to give epoxyqueuosine (oQ-tRNA). The sequence is that of S-adenosylmethionine:tRNA ribosyltransferase-isomerase from Clostridium botulinum (strain Eklund 17B / Type B).